The sequence spans 123 residues: Small ribosomal subunit protein uS12c (123 aa).

Belongs to the universal ribosomal protein uS12 family. Part of the 30S ribosomal subunit.

The protein localises to the plastid. Its subcellular location is the chloroplast. With S4 and S5 plays an important role in translational accuracy. Located at the interface of the 30S and 50S subunits. This Oenothera elata subsp. hookeri (Hooker's evening primrose) protein is Small ribosomal subunit protein uS12c (rps12).